The following is a 346-amino-acid chain: Flap endonuclease 1 (346 aa).

Residues 1–102 (MGVTELGKLI…AEIEERRKAK (102 aa)) are N-domain. The Mg(2+) site is built by aspartate 31, aspartate 84, glutamate 156, glutamate 158, aspartate 177, aspartate 179, and aspartate 239. Positions 120-261 (EVAKYAKRAI…RALKLIWEFG (142 aa)) are I-domain.

This sequence belongs to the XPG/RAD2 endonuclease family. FEN1 subfamily. Interacts with PCNA. PCNA stimulates the nuclease activity without altering cleavage specificity. The cofactor is Mg(2+).

Structure-specific nuclease with 5'-flap endonuclease and 5'-3' exonuclease activities involved in DNA replication and repair. During DNA replication, cleaves the 5'-overhanging flap structure that is generated by displacement synthesis when DNA polymerase encounters the 5'-end of a downstream Okazaki fragment. Binds the unpaired 3'-DNA end and kinks the DNA to facilitate 5' cleavage specificity. Cleaves one nucleotide into the double-stranded DNA from the junction in flap DNA, leaving a nick for ligation. Also involved in the base excision repair (BER) pathway. Acts as a genome stabilization factor that prevents flaps from equilibrating into structures that lead to duplications and deletions. Also possesses 5'-3' exonuclease activity on nicked or gapped double-stranded DNA. In Pyrobaculum arsenaticum (strain DSM 13514 / JCM 11321 / PZ6), this protein is Flap endonuclease 1.